Consider the following 491-residue polypeptide: Chondroitin proteoglycan 2 (491 aa).

The signal sequence occupies residues 1–18 (MKTIVALGLLALATAASG). One can recognise a Chitin-binding type-2 1 domain in the interval 21–78 (LQDCTNALDGLYAIGNCESQFLTCSGGIARIMDCPADLIYNEPLLICDWRHNVVGCEG). Cys-54 and Cys-67 are oxidised to a cystine. The segment at 80–126 (GEASGEQSGEGSGEASGEGSGEASGEGSGEASGEGSGSGEGSGEENN) is disordered. Residues 87–120 (SGEGSGEASGEGSGEASGEGSGEASGEGSGSGEG) show a composition bias toward gly residues. The Chitin-binding type-2 2 domain maps to 125-182 (NNVCEGLEDGAYSSGGCTTYYFFCTDNTARFLSCPTPLFYDVATQKCAWKALVEECNG). Cysteines 158 and 171 form a disulfide. A disordered region spans residues 187–217 (DGSGETSGEGSGEASGENSGENSGEGSGEFE). 2 O-linked (Xyl...) (chondroitin sulfate) serine glycosylation sites follow: Ser-197 and Ser-201. Residues 200–210 (ASGENSGENSG) show a composition bias toward low complexity. Chitin-binding type-2 domains are found at residues 217–274 (EPTC…ECHG), 279–334 (APVC…ECQE), 367–423 (ENEC…KCLI), and 436–491 (PFDC…LQCH). Intrachain disulfides connect Cys-250-Cys-263 and Cys-310-Cys-323. Residues 336 to 367 (SGEESSGEASGEQSGEGSGEASGEASGEASGE) form a disordered region. A compositionally biased stretch (low complexity) spans 356-367 (ASGEASGEASGE). A disulfide bond links Cys-399 and Cys-412. Residue Asn-464 is glycosylated (N-linked (GlcNAc...) asparagine). A disulfide bridge connects residues Cys-467 and Cys-481.

Required for polar body extrusion during cytokinesis in embryo development. Affects cortical granule size. Shown to have roles in meiotic chromosome segregation, osmotic barrier function and polarization in conjunction with cpg-2. Binds chitin. This chain is Chondroitin proteoglycan 2, found in Caenorhabditis briggsae.